Consider the following 438-residue polypeptide: MISFRFLLLSGLCALGISSYAETPKETTGHYHRYKARIQKKHPESIKESAPSETPHHNSLLSPVTNIFCSHPWKDGISVSNLLTSVEKATNTQISLDFSILPQWFYPHKALGQTQALEIPSWQFYFSPSTTWTLYDSPTAGQGIVDFSYTLIHYWQTNGVDANQAAGTASSMNDYSNRENNLAQLTFSQTFPGDFLTLAIGQYSLYAIDGTLYDNDQYSGFISYALSQNASATYSLGSTGAYLQFTPNSEIKVQLGFQDSYNIDGTNFSIYNLTKSKYNFYGYASWTPKPSCGDGQYSVLLYSTRKVPEQNSQVTGWSLNAAQHIHEKLYLFGRINGATGTALPINRSYVLGLVSENPLNRHSQDLLGIGFATNKVNAKAISNVNKLRRYESVMEAFATIGFGPYISLTPDFQLYIHPALRPERRTSQVYGLRANLSL.

The N-terminal stretch at 1–21 (MISFRFLLLSGLCALGISSYA) is a signal peptide.

It belongs to the OprB family.

Its subcellular location is the cell outer membrane. Facilitates L-arginine uptake, as part of the AaxABC system. The arginine uptake by the bacterium in the macrophage may be a virulence factor against the host innate immune response. This Chlamydia pneumoniae (Chlamydophila pneumoniae) protein is Porin AaxA (aaxA).